Here is a 249-residue protein sequence, read N- to C-terminus: Thioesterase TesA (249 aa).

Catalysis depends on residues serine 92, aspartate 196, and histidine 224.

The protein belongs to the thioesterase family.

It catalyses the reaction a fatty acyl-CoA + H2O = a fatty acid + CoA + H(+). Functionally, involved in the synthesis of both phthiocerol dimycocerosates (PDIMs) and phenolic glycolipids (PGLs), which are structurally related lipids non-covalently bound to the outer cell wall layer of M.tuberculosis and are important virulence factors. In Mycobacterium marinum (strain ATCC BAA-535 / M), this protein is Thioesterase TesA.